The chain runs to 113 residues: B-type lectin plumieribetin (113 aa).

A Bulb-type lectin domain is found at 1–109 (NYLSKNDELR…STEIWNSDKN (109 aa)).

As to quaternary structure, homotetramer. Interacts with alpha-1-beta-1 integrin (ITGA1/ITGB1). Post-translationally, not glycosylated. Not N-glycosylated and not O-glycosylated with the mostcommon O-linked glycoconjugates. The N-terminus is blocked. In terms of tissue distribution, expressed by sting venom glands and is also found in skin mucus. Not found in other tissues tested.

It is found in the secreted. May contribute to some of the local and systemic effects of envenomation by the scorpionfish. Preferentially recognizes mannose-containing carbohydrate structures, but its interaction with single mannose residues is weak. Potently inhibits alpha-1-beta-1 integrin (ITGA1/ITGB1) binding to basement membrane collagen IV in a divalent cation-independent manner. In addition, moderately inhibits both laminin binding integrins alpha-3-beta-1 (ITGA3/ITGB1) and alpha-7-beta-1 (ITGA7/ITGB1). Weakens the cell-collagen contacts, reduces cell spreading, and alters the actin cytoskeleton, after the compensating alpha-2-beta-1 integrin is blocked. On the cellular level, fails to completely detach hepatocarcinoma HepG2 cells and primary arterial smooth muscle cells from the collagen IV fragment CB3. The sequence is that of B-type lectin plumieribetin from Scorpaena plumieri (Spotted scorpionfish).